The sequence spans 472 residues: Uronate isomerase (472 aa).

Belongs to the metallo-dependent hydrolases superfamily. Uronate isomerase family.

It carries out the reaction D-glucuronate = D-fructuronate. It catalyses the reaction aldehydo-D-galacturonate = keto-D-tagaturonate. The protein operates within carbohydrate metabolism; pentose and glucuronate interconversion. The sequence is that of Uronate isomerase from Xanthomonas axonopodis pv. citri (strain 306).